A 156-amino-acid chain; its full sequence is Ribonuclease pancreatic (156 aa).

The N-terminal stretch at 1-28 is a signal peptide; sequence MALEKSLVLLPLLVLALLVLGWIQPSLG. K35 and R38 together coordinate substrate. H40 acts as the Proton acceptor in catalysis. Intrachain disulfides connect C54/C112, C68/C123, C86/C138, and C93/C100. Residue N62 is glycosylated (N-linked (GlcNAc...) asparagine). 69–73 contacts substrate; sequence KPVNT. N90 is a glycosylation site (N-linked (GlcNAc...) asparagine). Residue K94 coordinates substrate. N-linked (GlcNAc...) asparagine glycosylation occurs at N104. Residue R113 participates in substrate binding. The active-site Proton donor is H147.

Belongs to the pancreatic ribonuclease family. Monomer. Interacts with and forms tight 1:1 complexes with RNH1. Dimerization of two such complexes may occur. Interaction with RNH1 inhibits this protein.

The protein localises to the secreted. The enzyme catalyses an [RNA] containing cytidine + H2O = an [RNA]-3'-cytidine-3'-phosphate + a 5'-hydroxy-ribonucleotide-3'-[RNA].. The catalysed reaction is an [RNA] containing uridine + H2O = an [RNA]-3'-uridine-3'-phosphate + a 5'-hydroxy-ribonucleotide-3'-[RNA].. Its function is as follows. Endonuclease that catalyzes the cleavage of RNA on the 3' side of pyrimidine nucleotides. Acts on single-stranded and double-stranded RNA. The sequence is that of Ribonuclease pancreatic (RNASE1) from Lemur catta (Ring-tailed lemur).